A 449-amino-acid chain; its full sequence is Hyaluronidase (449 aa).

The first 23 residues, 1–23 (MYHLWIKCLAAWIFLKRFNGVHV), serve as a signal peptide directing secretion. 2 cysteine pairs are disulfide-bonded: Cys-47–Cys-340 and Cys-211–Cys-227. N-linked (GlcNAc...) asparagine glycans are attached at residues Asn-67, Asn-103, and Asn-111. Residue Glu-135 is the Proton donor of the active site. Asn-153 carries N-linked (GlcNAc...) asparagine glycosylation. Residue Asn-357 is glycosylated (N-linked (GlcNAc...) asparagine). 3 cysteine pairs are disulfide-bonded: Cys-365–Cys-376, Cys-370–Cys-427, and Cys-429–Cys-438. A glycan (N-linked (GlcNAc...) asparagine) is linked at Asn-401. Residues 427 to 438 (CQCYQGWKGLYC) enclose the EGF-like domain.

The protein belongs to the glycosyl hydrolase 56 family. As to quaternary structure, monomer. Expressed by the venom gland.

It is found in the secreted. The enzyme catalyses Random hydrolysis of (1-&gt;4)-linkages between N-acetyl-beta-D-glucosamine and D-glucuronate residues in hyaluronate.. Its function is as follows. Snake venom endo-hyaluronidase that degrades hyaluronan to smaller oligosaccharide fragments. In venom, it is not toxic by itself, but increases the diffusion of other venom proteins by degrading the extracellular matrix. In addition, it displays antiedematogenic activity. This Crotalus adamanteus (Eastern diamondback rattlesnake) protein is Hyaluronidase.